A 296-amino-acid chain; its full sequence is Phosphoribosylaminoimidazole-succinocarboxamide synthase (296 aa).

It belongs to the SAICAR synthetase family.

The enzyme catalyses 5-amino-1-(5-phospho-D-ribosyl)imidazole-4-carboxylate + L-aspartate + ATP = (2S)-2-[5-amino-1-(5-phospho-beta-D-ribosyl)imidazole-4-carboxamido]succinate + ADP + phosphate + 2 H(+). It participates in purine metabolism; IMP biosynthesis via de novo pathway; 5-amino-1-(5-phospho-D-ribosyl)imidazole-4-carboxamide from 5-amino-1-(5-phospho-D-ribosyl)imidazole-4-carboxylate: step 1/2. The sequence is that of Phosphoribosylaminoimidazole-succinocarboxamide synthase from Lachnospira eligens (strain ATCC 27750 / DSM 3376 / VPI C15-48 / C15-B4) (Eubacterium eligens).